Reading from the N-terminus, the 491-residue chain is Pyruvate carboxylase subunit A (491 aa).

One can recognise a Biotin carboxylation domain in the interval 1-445; that stretch reads MFSKILVANR…HTHFVDEYRR (445 aa). ATP contacts are provided by K116, E200, and H235. Residues 120–316 form the ATP-grasp domain; the sequence is KKLMKKAGVP…LVKEQIRVAS (197 aa). R291 is a catalytic residue.

As to quaternary structure, heterooctamer of four A and four B subunits. Mg(2+) is required as a cofactor. Requires Mn(2+) as cofactor. The cofactor is Co(2+).

The enzyme catalyses hydrogencarbonate + pyruvate + ATP = oxaloacetate + ADP + phosphate + H(+). Its pathway is carbohydrate biosynthesis; gluconeogenesis. With respect to regulation, inhibited by ADP and alpha-ketoglutarate. Functionally, pyruvate carboxylase catalyzes a 2-step reaction, involving the ATP-dependent carboxylation of the covalently attached biotin in the first step and the transfer of the carboxyl group to pyruvate in the second. This is Pyruvate carboxylase subunit A (pycA) from Methanothermobacter thermautotrophicus (strain ATCC 29096 / DSM 1053 / JCM 10044 / NBRC 100330 / Delta H) (Methanobacterium thermoautotrophicum).